A 245-amino-acid polypeptide reads, in one-letter code: Homeobox protein goosecoid (245 aa).

The homeobox DNA-binding region spans 150–209; it reads KRRHRTIFTDEQLEALENLFQETKYPDVGTREQLARKVHLREEKVEVWFKNRRAKWRRQK. The tract at residues 203–245 is disordered; that stretch reads AKWRRQKRSSSEESENAQKWNKASKTSPEKRQEDGKSDLDSDS. Residues 219–228 are compositionally biased toward polar residues; sequence AQKWNKASKT. Residues 229–245 show a composition bias toward basic and acidic residues; the sequence is SPEKRQEDGKSDLDSDS.

The protein belongs to the paired homeobox family. Bicoid subfamily.

The protein resides in the nucleus. Functionally, involved in the development of the organizer region in the gastrula (Hensen node in chicken). This chain is Homeobox protein goosecoid (GSC), found in Gallus gallus (Chicken).